We begin with the raw amino-acid sequence, 175 residues long: NADH dehydrogenase [ubiquinone] iron-sulfur protein 4, mitochondrial (175 aa).

The transit peptide at methionine 1–leucine 42 directs the protein to the mitochondrion. The tract at residues lysine 151–lysine 175 is disordered. Serine 173 bears the Phosphoserine; by PKA mark.

Belongs to the complex I NDUFS4 subunit family. As to quaternary structure, mammalian complex I is composed of 45 different subunits. This is a component of the iron-sulfur (IP) fragment of the enzyme. Interacts with BCAP31 and TOMM40; the interaction mediates its translocation to the mitochondria; the interaction with BCAP31 is direct.

The protein resides in the mitochondrion inner membrane. In terms of biological role, accessory subunit of the mitochondrial membrane respiratory chain NADH dehydrogenase (Complex I), that is believed not to be involved in catalysis. Complex I functions in the transfer of electrons from NADH to the respiratory chain. The immediate electron acceptor for the enzyme is believed to be ubiquinone. The polypeptide is NADH dehydrogenase [ubiquinone] iron-sulfur protein 4, mitochondrial (NDUFS4) (Homo sapiens (Human)).